The primary structure comprises 1241 residues: MHIRGTMSRVPTLASFEVRYKKSFGHKFRDFIALCGHYCSPIKKYIFPNFIAVHYFYTIVLTLITSILLYPVKNIRYIDALFLAAGAVTQGGLNTVDVNNLTLYQQIILYIICCISTPIAVHSCLAFVRLYWFERYFDGIRDSSRLNFKMRRTKTILERELTARTMTKSKTGGTQRVSRPGKSDKRDDFQEKLFNGEMVNRDEQDSVHSSHNSRDSNSNANTNSSNNNSINHNGSSGSLDDYVREDKADEVEKYHGNKSYSSVGSSSNTATDENISQKLKPSSLRFDESQNKRKRTGAPSEKFAKRRGSRDITPEDMYRSIMMLQGEHEGTAEDEGPPLVIGSPTDGTRNMDNGSESKSAPTMNESKIRIQDKGAKISLDQDSVLHSSNSSACTSDEDSLPTNFGGTTPSLSAKPRESSSGPIAFTEGENADRKQGPSIQFNITKPPRKASKSKRVSTMDDLNPRSIFPHQKKSSKGYIMKHLPKARRIRQQIKRRLSTGSIDKNSSSDALDRGLISGLNDDDDGNEGDNMEEYFADNESGDEDDRMQQSEPQSGSELKLKQQQQHQLQQNLHRMYKTKSFDDNRSKPVLMERSKTIDMAEARDLNELARTPDFQKMVYKNWKAHHRNKPNFKRRGWNGKMFEHGPYTSDSDHNYQDNGNNSNSIVHYAESILHRDNSHRNGSEDVSSDSNETTYPLNGNNDHSQNDANGYPTYNDEEEGYYGLHFDSDYNLDPHHALSSNASKNYLSWQPTIGRNSNFLGLTRAQKDELGGVEYRAIKLLCTILVVYYVGWHIVSFVMLVPWINLKKHYSDIVRSDGVSPTWWGFWTAMSAFNDLGLTLTPDSMMSFDKAVYPLIVMIWFIIIGNTGFPILLRCIIWIMFKLSPDLSQMRESLGFLLDHPRRCFTLLFPKAATWWLLLTLVGLNFTDWILFIILDFGSTVVKSLSKGYRVLVGLFQSVSTRTAGFSVVDLSQLHPSIQVSYMLMMYVSVLPLAISIRRTNVYEEQSLGLYGEMGGKPEDTDTEEDGDCDDEDDDNEEEESHEGGSSQRGKSKKETKKKKKRKENENPNEESTKSFIGAHLRRQLSFDLWFLFLGLFIICICERDKIKDIQRPNFNVFTILFEIVSAYGTVGLSLGYPNTNQSFSRQLTTLSKLIIIAMLIRGKNRGLPYSLDRAIILPSDRLEHIDHIEDLKLKRQARTDTDDPMTEHLKRSISDAKHRWDELKHKRSLSRSSKRSTKTN.

The next 2 helical transmembrane spans lie at 49–70 (NFIA…ILLY) and 78–98 (IDAL…TVDV). The N-linked (GlcNAc...) asparagine glycan is linked to asparagine 100. Residues 107–127 (IILYIICCISTPIAVHSCLAF) traverse the membrane as a helical segment. 3 disordered regions span residues 162–241 (TART…SLDD), 253–316 (KYHG…TPED), and 329–570 (EGTA…QLQQ). Positions 164 to 177 (RTMTKSKTGGTQRV) are enriched in polar residues. Basic and acidic residues-rich tracts occupy residues 181 to 191 (GKSDKRDDFQE) and 199 to 214 (VNRD…HNSR). Over residues 215–238 (DSNSNANTNSSNNNSINHNGSSGS) the composition is skewed to low complexity. Residues asparagine 223, asparagine 227, asparagine 233, asparagine 257, asparagine 274, asparagine 353, and asparagine 364 are each glycosylated (N-linked (GlcNAc...) asparagine). 2 stretches are compositionally biased toward polar residues: residues 268–280 (NTAT…QKLK) and 345–365 (TDGT…TMNE). Positions 366-375 (SKIRIQDKGA) are enriched in basic and acidic residues. The span at 380-411 (DQDSVLHSSNSSACTSDEDSLPTNFGGTTPSL) shows a compositional bias: polar residues. 2 N-linked (GlcNAc...) asparagine glycosylation sites follow: asparagine 389 and asparagine 442. Basic residues-rich tracts occupy residues 446–455 (PPRKASKSKR) and 482–497 (HLPK…KRRL). The segment covering 498-509 (STGSIDKNSSSD) has biased composition (polar residues). N-linked (GlcNAc...) asparagine glycosylation is found at asparagine 505 and asparagine 538. The segment covering 520–545 (NDDDDGNEGDNMEEYFADNESGDEDD) has biased composition (acidic residues). Residues 561–570 (KQQQQHQLQQ) are compositionally biased toward low complexity. N-linked (GlcNAc...) asparagine glycosylation is found at asparagine 584, asparagine 660, asparagine 681, asparagine 691, and asparagine 741. The interval 677–714 (NSHRNGSEDVSSDSNETTYPLNGNNDHSQNDANGYPTY) is disordered. The segment covering 684-708 (EDVSSDSNETTYPLNGNNDHSQNDA) has biased composition (polar residues). The next 5 membrane-spanning stretches (helical) occupy residues 784–806 (ILVV…WINL), 819–840 (VSPT…GLTL), 844–864 (SMMS…FIII), 868–888 (GFPI…PDLS), and 904–924 (CFTL…LVGL). N-linked (GlcNAc...) asparagine glycosylation occurs at asparagine 925. The next 2 membrane-spanning stretches (helical) occupy residues 929–949 (WILF…SKGY) and 977–997 (SIQV…AISI). The interval 1011–1073 (YGEMGGKPED…ENENPNEEST (63 aa)) is disordered. Positions 1021–1041 (TDTEEDGDCDDEDDDNEEEES) are enriched in acidic residues. A compositionally biased stretch (basic residues) spans 1050 to 1062 (GKSKKETKKKKKR). Helical transmembrane passes span 1084 to 1104 (QLSF…ICER) and 1117 to 1137 (VFTI…SLGY). N-linked (GlcNAc...) asparagine glycosylation occurs at asparagine 1141. The disordered stretch occupies residues 1222–1241 (DELKHKRSLSRSSKRSTKTN). Residues 1226–1241 (HKRSLSRSSKRSTKTN) show a composition bias toward basic residues.

It belongs to the TrkH potassium transport family.

It is found in the membrane. This protein is required for high-affinity potassium transport. The chain is High-affinity potassium transport protein (TRK1) from Saccharomyces uvarum (Yeast).